Here is a 441-residue protein sequence, read N- to C-terminus: UDP-N-acetylglucosamine--N-acetylmuramyl-(pentapeptide) pyrophosphoryl-undecaprenol N-acetylglucosamine transferase (441 aa).

Residues 28 to 30 (TGG), Asn-140, Arg-176, Ser-204, Ile-257, and Gln-302 contribute to the UDP-N-acetyl-alpha-D-glucosamine site.

Belongs to the glycosyltransferase 28 family. MurG subfamily.

The protein localises to the cell inner membrane. The enzyme catalyses di-trans,octa-cis-undecaprenyl diphospho-N-acetyl-alpha-D-muramoyl-L-alanyl-D-glutamyl-meso-2,6-diaminopimeloyl-D-alanyl-D-alanine + UDP-N-acetyl-alpha-D-glucosamine = di-trans,octa-cis-undecaprenyl diphospho-[N-acetyl-alpha-D-glucosaminyl-(1-&gt;4)]-N-acetyl-alpha-D-muramoyl-L-alanyl-D-glutamyl-meso-2,6-diaminopimeloyl-D-alanyl-D-alanine + UDP + H(+). It participates in cell wall biogenesis; peptidoglycan biosynthesis. In terms of biological role, cell wall formation. Catalyzes the transfer of a GlcNAc subunit on undecaprenyl-pyrophosphoryl-MurNAc-pentapeptide (lipid intermediate I) to form undecaprenyl-pyrophosphoryl-MurNAc-(pentapeptide)GlcNAc (lipid intermediate II). In Xanthomonas oryzae pv. oryzae (strain MAFF 311018), this protein is UDP-N-acetylglucosamine--N-acetylmuramyl-(pentapeptide) pyrophosphoryl-undecaprenol N-acetylglucosamine transferase.